The sequence spans 125 residues: Putative glutaredoxin-C2 (125 aa).

One can recognise a Glutaredoxin domain in the interval 2–103 (AERVARLSSQ…PLLREAGALW (102 aa)). Cys22 and Cys25 form a disulfide bridge.

The protein belongs to the glutaredoxin family. CC-type subfamily.

It localises to the cytoplasm. Its function is as follows. Has a glutathione-disulfide oxidoreductase activity in the presence of NADPH and glutathione reductase. Reduces low molecular weight disulfides and proteins. The sequence is that of Putative glutaredoxin-C2 (GRXC2) from Oryza sativa subsp. japonica (Rice).